Consider the following 641-residue polypeptide: Threonine--tRNA ligase (641 aa).

In terms of domain architecture, TGS spans 1 to 61 (MPAITLPDGS…ADDASVRFIT (61 aa)). The tract at residues 243–536 (DHRRIGREMD…LIEQHAGRFP (294 aa)) is catalytic. Positions 336, 387, and 513 each coordinate Zn(2+).

The protein belongs to the class-II aminoacyl-tRNA synthetase family. Homodimer. The cofactor is Zn(2+).

The protein resides in the cytoplasm. The catalysed reaction is tRNA(Thr) + L-threonine + ATP = L-threonyl-tRNA(Thr) + AMP + diphosphate + H(+). Catalyzes the attachment of threonine to tRNA(Thr) in a two-step reaction: L-threonine is first activated by ATP to form Thr-AMP and then transferred to the acceptor end of tRNA(Thr). Also edits incorrectly charged L-seryl-tRNA(Thr). The chain is Threonine--tRNA ligase from Gluconacetobacter diazotrophicus (strain ATCC 49037 / DSM 5601 / CCUG 37298 / CIP 103539 / LMG 7603 / PAl5).